Consider the following 432-residue polypeptide: Ribosomal protein uS12 methylthiotransferase RimO (432 aa).

An MTTase N-terminal domain is found at 2 to 115 (IRVAVITLGC…LPEIINRVLK (114 aa)). [4Fe-4S] cluster is bound by residues cysteine 11, cysteine 47, cysteine 78, cysteine 151, cysteine 155, and cysteine 158. Residues 137 to 367 (EDGKPFAYLK…MLHQQSITRA (231 aa)) form the Radical SAM core domain.

Belongs to the methylthiotransferase family. RimO subfamily. The cofactor is [4Fe-4S] cluster.

Its subcellular location is the cytoplasm. The catalysed reaction is L-aspartate(89)-[ribosomal protein uS12]-hydrogen + (sulfur carrier)-SH + AH2 + 2 S-adenosyl-L-methionine = 3-methylsulfanyl-L-aspartate(89)-[ribosomal protein uS12]-hydrogen + (sulfur carrier)-H + 5'-deoxyadenosine + L-methionine + A + S-adenosyl-L-homocysteine + 2 H(+). Its function is as follows. Catalyzes the methylthiolation of an aspartic acid residue of ribosomal protein uS12. The sequence is that of Ribosomal protein uS12 methylthiotransferase RimO from Moorella thermoacetica (strain ATCC 39073 / JCM 9320).